We begin with the raw amino-acid sequence, 204 residues long: Large ribosomal subunit protein uL4 (204 aa).

A disordered region spans residues 52–76; sequence AEVRGGGKKPWAQKGGGRARAGSRR.

It belongs to the universal ribosomal protein uL4 family. Part of the 50S ribosomal subunit.

Functionally, one of the primary rRNA binding proteins, this protein initially binds near the 5'-end of the 23S rRNA. It is important during the early stages of 50S assembly. It makes multiple contacts with different domains of the 23S rRNA in the assembled 50S subunit and ribosome. In terms of biological role, forms part of the polypeptide exit tunnel. This Sulfurimonas denitrificans (strain ATCC 33889 / DSM 1251) (Thiomicrospira denitrificans (strain ATCC 33889 / DSM 1251)) protein is Large ribosomal subunit protein uL4.